We begin with the raw amino-acid sequence, 118 residues long: Small integral membrane protein 17 (118 aa).

The disordered stretch occupies residues 1–84 (MQSLRPEQTR…DDESEGSQGF (84 aa)). Basic and acidic residues predominate over residues 13–42 (LEPERTKTLLPRESRAWEKPPHPACTKDWE). A helical transmembrane segment spans residues 96 to 116 (IVLVVCVLFLFLVLTGMPMMF).

It is found in the membrane. The chain is Small integral membrane protein 17 (SMIM17) from Homo sapiens (Human).